Here is a 1057-residue protein sequence, read N- to C-terminus: Self-sufficient cytochrome P450 monooxygenase CYP505E3 (1057 aa).

Cysteine 403 lines the heme pocket. The segment at 465-488 (PSAAPFSSHARETTNASLPASPGT) is disordered. One can recognise a Flavodoxin-like domain in the interval 494–634 (MYVLYGSNTG…AFEAWETKLW (141 aa)). FMN-binding positions include 500 to 504 (SNTGT) and 578 to 610 (VFGC…QRLV). An FAD-binding FR-type domain is found at 671-900 (HDAALGTVIE…RASNAAFHLP (230 aa)).

This sequence in the N-terminal section; belongs to the cytochrome P450 family. Requires FAD as cofactor. The cofactor is FMN. Heme is required as a cofactor.

It carries out the reaction 2 oxidized [cytochrome P450] + NADPH = 2 reduced [cytochrome P450] + NADP(+) + H(+). It catalyses the reaction an organic molecule + reduced [NADPH--hemoprotein reductase] + O2 = an alcohol + oxidized [NADPH--hemoprotein reductase] + H2O + H(+). The catalysed reaction is dodecan-1-ol + reduced [NADPH--hemoprotein reductase] + O2 = 1,5-dodecanediol + oxidized [NADPH--hemoprotein reductase] + H2O + H(+). The enzyme catalyses dodecan-1-ol + reduced [NADPH--hemoprotein reductase] + O2 = 1,6-dodecanediol + oxidized [NADPH--hemoprotein reductase] + H2O + H(+). Self-sufficient cytochrome P450 monooxygenase that catalyzes the regioselective in-chain hydroxylation of fatty alcohols (C9-15) as well as fatty acids (C9-15) at the omega-1 to omega-7 or omega-1 to omega-6 positions, respectively. Is also able to convert naphthalene to 1-naphthol and 1-naphthol further to 1,3-dihydroxynaphthalene. This is Self-sufficient cytochrome P450 monooxygenase CYP505E3 from Phanerodontia chrysosporium (White-rot fungus).